The chain runs to 117 residues: MTRIKRGYIARRRRTKLRLFASSFRGAHSRLTRTMTQQRIRALVSAHRDRGKRKRDFRRLWITRLNAVIHETGVFHSYNRFIHNLYKKQLLLNRKILAQIALLNRSCLYTISNEIKE.

Belongs to the bacterial ribosomal protein bL20 family.

The protein resides in the plastid. Its subcellular location is the chloroplast. Its function is as follows. Binds directly to 23S ribosomal RNA and is necessary for the in vitro assembly process of the 50S ribosomal subunit. It is not involved in the protein synthesizing functions of that subunit. In Arabis hirsuta (Hairy rock-cress), this protein is Large ribosomal subunit protein bL20c.